Reading from the N-terminus, the 781-residue chain is Sialidase (781 aa).

Positions 1–24 (MRFKNVKKTALMLAMFGMATSSNA) are cleaved as a signal peptide. Arginine 224 is a substrate binding site. Catalysis depends on aspartate 250, which acts as the Proton acceptor. BNR repeat units lie at residues 263–274 (RTSRDGGITWDT) and 585–596 (IYSDDGGSNWQT). Residue glutamate 619 is part of the active site. Arginine 635 contributes to the substrate binding site. Residues 653 to 664 (FLSKDGGITWSL) form a BNR 3 repeat. Arginine 712 lines the substrate pocket. The BNR 4 repeat unit spans residues 718 to 729 (WFSFDEGVTWKG). Catalysis depends on tyrosine 740, which acts as the Nucleophile.

This sequence belongs to the glycosyl hydrolase 33 family. As to quaternary structure, monomer. The cofactor is Ca(2+).

The protein localises to the secreted. It carries out the reaction Hydrolysis of alpha-(2-&gt;3)-, alpha-(2-&gt;6)-, alpha-(2-&gt;8)- glycosidic linkages of terminal sialic acid residues in oligosaccharides, glycoproteins, glycolipids, colominic acid and synthetic substrates.. In terms of biological role, cleaves the terminal sialic acid (N-acetyl neuraminic acid) from carbohydrate chains in glycoproteins providing free sialic acid which can be used as carbon and energy sources. Sialidases have been suggested to be pathogenic factors in microbial infections. Facilitates cholera toxin binding to host intestinal epithelial cells by converting cell surface polysialogangliosides to GM1 monogangliosides. In Vibrio cholerae serotype O1 (strain ATCC 39541 / Classical Ogawa 395 / O395), this protein is Sialidase (nanH).